The chain runs to 778 residues: Endonuclease MutS2 (778 aa).

328–335 (GPNTGGKT) is a binding site for ATP. The region spanning 702 to 777 (LDLRGKRYEE…GSGATIVTFK (76 aa)) is the Smr domain.

Belongs to the DNA mismatch repair MutS family. MutS2 subfamily. Homodimer. Binds to stalled ribosomes, contacting rRNA.

Functionally, endonuclease that is involved in the suppression of homologous recombination and thus may have a key role in the control of bacterial genetic diversity. In terms of biological role, acts as a ribosome collision sensor, splitting the ribosome into its 2 subunits. Detects stalled/collided 70S ribosomes which it binds and splits by an ATP-hydrolysis driven conformational change. Acts upstream of the ribosome quality control system (RQC), a ribosome-associated complex that mediates the extraction of incompletely synthesized nascent chains from stalled ribosomes and their subsequent degradation. Probably generates substrates for RQC. This chain is Endonuclease MutS2, found in Streptococcus pneumoniae (strain ATCC 700669 / Spain 23F-1).